Here is a 104-residue protein sequence, read N- to C-terminus: Large ribosomal subunit protein uL24 (104 aa).

Belongs to the universal ribosomal protein uL24 family. In terms of assembly, part of the 50S ribosomal subunit.

One of two assembly initiator proteins, it binds directly to the 5'-end of the 23S rRNA, where it nucleates assembly of the 50S subunit. Functionally, one of the proteins that surrounds the polypeptide exit tunnel on the outside of the subunit. This is Large ribosomal subunit protein uL24 from Maricaulis maris (strain MCS10) (Caulobacter maris).